We begin with the raw amino-acid sequence, 238 residues long: Thymidine kinase, cytosolic (238 aa).

Serine 2 carries the N-acetylserine modification. 2 positions are modified to phosphoserine: serine 2 and serine 13. Residues 26–33 (GPMFSGKS), 58–60 (DTR), and 97–100 (DEGQ) contribute to the ATP site. Catalysis depends on glutamate 98, which acts as the Proton acceptor. Phenylalanine 128 contacts substrate. Cysteine 153 and cysteine 156 together coordinate Zn(2+). Substrate is bound by residues 172–176 (VEVIG) and tyrosine 181. Residues cysteine 185 and cysteine 188 each coordinate Zn(2+). The short motif at 206–208 (KEN) is the KEN box element. Serine 235 is subject to Phosphoserine.

The protein belongs to the thymidine kinase family. As to quaternary structure, homotetramer. Tetramerization from dimerization is induced by ATP and increases catalytic efficiency due to a high affinity for thymidine. Tetramerization is inhibited by phosphorylation at Ser-13. Interacts (via the KEN box) with FZR1. Post-translationally, phosphorylated on Ser-13 in mitosis. Phosphorylation of Ser-13 by CDK1 during mitosis reduces homotetramerization and catalytic efficiency when DNA replication is complete and intracellular TK1 is still present at a high level. Polyubiquitinated. Postmitosis, ubiquitination leads to proteasomal degradation. The KEN box sequence located at the C-terminal region targets for degradation by the anaphase promoting complex (APC/C) activated and rate-limited by FZR1.

The protein resides in the cytoplasm. The enzyme catalyses thymidine + ATP = dTMP + ADP + H(+). Functionally, cell-cycle-regulated enzyme of importance in nucleotide metabolism. Catalyzes the first enzymatic step in the salvage pathway converting thymidine into thymidine monophosphate. Transcriptional regulation limits expression to the S phase of the cell cycle and transient expression coincides with the oscillation in the intracellular dTTP concentration. This Bos taurus (Bovine) protein is Thymidine kinase, cytosolic (TK1).